The sequence spans 402 residues: CCA-adding enzyme (402 aa).

ATP contacts are provided by Gly-32 and Arg-35. Gly-32 and Arg-35 together coordinate CTP. Residues Asp-45 and Asp-47 each contribute to the Mg(2+) site. The ATP site is built by Arg-119, Asp-162, Arg-165, Arg-168, and Arg-171. Residues Arg-119, Asp-162, Arg-165, Arg-168, and Arg-171 each coordinate CTP.

It belongs to the tRNA nucleotidyltransferase/poly(A) polymerase family. Bacterial CCA-adding enzyme type 3 subfamily. In terms of assembly, homodimer. It depends on Mg(2+) as a cofactor.

It carries out the reaction a tRNA precursor + 2 CTP + ATP = a tRNA with a 3' CCA end + 3 diphosphate. The enzyme catalyses a tRNA with a 3' CCA end + 2 CTP + ATP = a tRNA with a 3' CCACCA end + 3 diphosphate. In terms of biological role, catalyzes the addition and repair of the essential 3'-terminal CCA sequence in tRNAs without using a nucleic acid template. Adds these three nucleotides in the order of C, C, and A to the tRNA nucleotide-73, using CTP and ATP as substrates and producing inorganic pyrophosphate. tRNA 3'-terminal CCA addition is required both for tRNA processing and repair. Also involved in tRNA surveillance by mediating tandem CCA addition to generate a CCACCA at the 3' terminus of unstable tRNAs. While stable tRNAs receive only 3'-terminal CCA, unstable tRNAs are marked with CCACCA and rapidly degraded. The chain is CCA-adding enzyme from Lactococcus lactis subsp. cremoris (strain SK11).